The following is a 232-amino-acid chain: Cysteine proteinase inhibitor 7 (232 aa).

Residues 1 to 29 form the signal peptide; that stretch reads MDMRRASMCMMLICVSLVLLSGFGQFVIC. 2 Cystatin domains span residues 46–135 and 152–214; these read GGFS…KNII and FDWR…ERGN. The short motif at 91–95 is the Secondary area of contact element; sequence QVVAG. S181 is modified (phosphoserine).

This sequence belongs to the cystatin family. Phytocystatin subfamily.

The protein localises to the secreted. Its function is as follows. Specific inhibitor of cysteine proteinases. Probably involved in the regulation of endogenous processes and in defense against pests and pathogens. In Arabidopsis thaliana (Mouse-ear cress), this protein is Cysteine proteinase inhibitor 7 (CYS7).